The following is a 466-amino-acid chain: Chromosomal replication initiator protein DnaA (466 aa).

Positions 1 to 86 (MSLSLWQQCL…EVGTKPVTQT (86 aa)) are domain I, interacts with DnaA modulators. The tract at residues 86 to 129 (TLKTPVHNVVAPTQTTTAQPQRVAPAARSGWDNVPAPAEPTYRS) is domain II. The tract at residues 130–346 (NVNVKHTFDN…GALNRVIANA (217 aa)) is domain III, AAA+ region. The ATP site is built by glycine 174, glycine 176, lysine 177, and threonine 178. The segment at 347 to 466 (NFTGRAITID…FSNLIRTLSS (120 aa)) is domain IV, binds dsDNA.

The protein belongs to the DnaA family. As to quaternary structure, oligomerizes as a right-handed, spiral filament on DNA at oriC.

The protein resides in the cytoplasm. In terms of biological role, plays an essential role in the initiation and regulation of chromosomal replication. ATP-DnaA binds to the origin of replication (oriC) to initiate formation of the DNA replication initiation complex once per cell cycle. Binds the DnaA box (a 9 base pair repeat at the origin) and separates the double-stranded (ds)DNA. Forms a right-handed helical filament on oriC DNA; dsDNA binds to the exterior of the filament while single-stranded (ss)DNA is stabiized in the filament's interior. The ATP-DnaA-oriC complex binds and stabilizes one strand of the AT-rich DNA unwinding element (DUE), permitting loading of DNA polymerase. After initiation quickly degrades to an ADP-DnaA complex that is not apt for DNA replication. Binds acidic phospholipids. The sequence is that of Chromosomal replication initiator protein DnaA from Salmonella choleraesuis (strain SC-B67).